Reading from the N-terminus, the 1161-residue chain is Nuclear receptor-interacting protein 1 (1161 aa).

Residues 1 to 416 (MTHGEELGSD…FESSTPTTID (416 aa)) form an interaction with ZNF366 region. Residues 21 to 25 (LEGLL) carry the LXXLL motif 1 motif. Residues 34 to 68 (GTAINKKSAGHKEEDQNFNLSGSAFPSCQSNGPTV) form a disordered region. The segment covering 50–68 (NFNLSGSAFPSCQSNGPTV) has biased composition (polar residues). Residues 78–335 (MLHLKKARLL…LNGQARALPA (258 aa)) form a repression domain 1 region. A Phosphoserine modification is found at S104. N6-acetyllysine; alternate is present on K111. K111 is covalently cross-linked (Glycyl lysine isopeptide (Lys-Gly) (interchain with G-Cter in SUMO2); alternate). An LXXLL motif 2 motif is present at residues 133-137 (LASLL). K158 carries the N6-acetyllysine modification. Residue K170 forms a Glycyl lysine isopeptide (Lys-Gly) (interchain with G-Cter in SUMO2) linkage. The short motif at 185–189 (LKTLL) is the LXXLL motif 3 element. Glycyl lysine isopeptide (Lys-Gly) (interchain with G-Cter in SUMO2) cross-links involve residues K195 and K198. At T207 the chain carries Phosphothreonine. At S218 the chain carries Phosphoserine. Residues 267 to 271 (LALLL) carry the LXXLL motif 4 motif. An N6-acetyllysine mark is found at K287 and K311. At S358 the chain carries Phosphoserine. Residue K374 forms a Glycyl lysine isopeptide (Lys-Gly) (interchain with G-Cter in SUMO2) linkage. The residue at position 380 (S380) is a Phosphoserine. The LXXLL motif 5 signature appears at 382-386 (LLHLL). The interval 393 to 436 (TPMNGHSQNERASSFESSTPTTIDEYSDNNPSFTDDSSGDESSY) is disordered. The segment at 411–701 (TPTTIDEYSD…PAGPEPGLPG (291 aa)) is repression domain 2. A required for targeting to small nuclear foci region spans residues 432 to 473 (DESSYSNCVPIDLSCKHRIEKPEAERPVSLENLTQSLLNTWD). Residues 441 to 447 (PIDLSCK) carry the CTBP-binding; principal site motif. An N6-acetyllysine mark is found at K447 and K482. Position 488 is a phosphoserine (S488). Residues 501–505 (LLQLL) carry the LXXLL motif 6 motif. Residue K509 forms a Glycyl lysine isopeptide (Lys-Gly) (interchain with G-Cter in SUMO2) linkage. Over residues 517–552 (NASPQDIHSDGTKFSPQNYTRTSVIESPSTNRTTPV) the composition is skewed to polar residues. The tract at residues 517-559 (NASPQDIHSDGTKFSPQNYTRTSVIESPSTNRTTPVSTPPLYT) is disordered. A Phosphoserine modification is found at S519. K529 is subject to N6-acetyllysine. A phosphoserine mark is found at S531, S543, and S565. Positions 566 to 570 (PINLS) match the CTBP-binding motif. Disordered stretches follow at residues 604-623 (TKGKESQAEKPAPSEGAQNS), 639-702 (GLQS…LPGC), and 717-747 (LLGNSSKGKNEKKEKTPARDEAPQEHSERAA). An N6-acetyllysine modification is found at K607. S672 bears the Phosphoserine mark. The LXXLL motif 7 motif lies at 714 to 718 (LQLLL). Positions 724-747 (GKNEKKEKTPARDEAPQEHSERAA) are enriched in basic and acidic residues. Residues 736–886 (DEAPQEHSER…TAVDTANHHS (151 aa)) form a repression domain 3 region. The tract at residues 754–1161 (VKIKSEPCDD…NALTIKKESE (408 aa)) is interaction with ZNF366. Residues K757 and K803 each participate in a glycyl lysine isopeptide (Lys-Gly) (interchain with G-Cter in SUMO2) cross-link. S808 is modified (phosphoserine). The LXXLL motif 8 signature appears at 820-824 (LSRLL). Residues 829–848 (ESYPADEQDKSHRNSELPTL) form a disordered region. Residues K851 and K902 each participate in a glycyl lysine isopeptide (Lys-Gly) (interchain with G-Cter in SUMO2) cross-link. The residue at position 932 (K932) is an N6-acetyllysine; alternate. K932 is covalently cross-linked (Glycyl lysine isopeptide (Lys-Gly) (interchain with G-Cter in SUMO2); alternate). Residues 937-941 (LKQLL) carry the LXXLL motif 9 motif. Residues 947-951 (VRDLS) carry the CTBP-binding motif. Basic and acidic residues predominate over residues 950–962 (LSPHRSDSVPDTK). The disordered stretch occupies residues 950-976 (LSPHRSDSVPDTKKKGHKNNAPGSKPE). The residue at position 1003 (S1003) is a Phosphoserine. The interval 1063–1076 (LTKTNPILYYMLQK) is ligand-dependent nuclear receptor binding. Residues K1108, K1118, and K1157 each participate in a glycyl lysine isopeptide (Lys-Gly) (interchain with G-Cter in SUMO2) cross-link. The repression domain 4 stretch occupies residues 1121–1161 (FFNLRSPYNSHMGNNASRPHSTNGEVYGLLGNALTIKKESE).

Interacts with CTBP1, CTBP2, ERS1, HDAC1, HDAC2, HDAC5, HDAC6, NR2C2, NR3C1, NR3C2, YWHAH, JUN and FOS. Found in a complex with both NR3C1 and YWHAH. Interacts with NR2C1 (sumoylated form and via the ligand-binding domain); the interaction results in promoting the repressor activity of NR2C1. Interacts with RARA and RXRB homodimers and RARA/RXRB heterodimers in the presence of ligand. Interacts with HDAC1 and HDAC3 via its N-terminal domain. Interacts with ZNF366. Interacts with RORA. Acetylation abolishes interaction with CTBP1. Phosphorylation enhances interaction with YWHAH. Acetylation regulates its nuclear translocation and corepressive activity. Expressed in the embryonic placenta. In the adult, expression is strong in the testis and brain. Also expressed at a high level in the white adipose tissue. Expressed constantly but at a weaker level in the adult heart, lung, stomach and kidney. Expressed moderately in the skeletal muscle. Expressed at a low level in the adult spleen, liver and brown adipose tissue. Expressed in the ovary at a high level in granulosa cells and at a lower level in the thecal and interstitial compartments.

The protein localises to the nucleus. Functionally, modulates transcriptional repression by nuclear hormone receptors such as NR2C1, thyroid hormone receptor and retinoic acid receptor/RARA. Essential for cumulus expansion and follicle rupture during ovulation. Also controls the balance between fat accumulation and energy expenditure. Positive regulator of the circadian clock gene expression: stimulates transcription of BMAL1, CLOCK and CRY1 by acting as a coactivator for RORA and RORC. Involved in the regulation of ovarian function. Plays a role in renal development. In Mus musculus (Mouse), this protein is Nuclear receptor-interacting protein 1.